The primary structure comprises 409 residues: Sulfide-quinone reductase (409 aa).

FAD contacts are provided by residues 8–12 (GGRFG), 34–35 (NK), and cysteine 129. Residue cysteine 178 is the Cysteine persulfide intermediate of the active site. The FAD site is built by asparagine 271, aspartate 307, and glycine 317. Cysteine 350 acts as the Cysteine persulfide intermediate in catalysis.

The protein belongs to the SQRD family. Monomer. The cofactor is FAD.

The protein localises to the membrane. It carries out the reaction n a quinone + n hydrogen sulfide + n H(+) = polysulfur(n-2) + n a quinol. Inhibited by the quinone analog 2-heptyl-4-hydroxyquinolone N-oxide (HQNO). Inactivated by iodoacetamide treatment. Inhibited by KCN. Functionally, catalyzes the oxidation of sulfides, such as hydrogen sulfide, with the help of a quinone. Has the highest activity with caldariella quinone and decylubiquinone, and lower activity with naphtoquinones. Consecutive reaction cycles lead to the accumulation of a polysulfide product on the active site Cys residues; these products are released when they exceed a critical length, typically as cyclooctasulfur. The chain is Sulfide-quinone reductase from Acidianus ambivalens (Desulfurolobus ambivalens).